The sequence spans 109 residues: Envelope small membrane protein (109 aa).

Topologically, residues 1-11 (MTNLLNKSLEE) are virion surface. Residues 12-32 (NGSFLTAVYIFVGFVALYLLG) traverse the membrane as a helical segment. Residues 33 to 109 (RALQAFVQAA…QDVQRNKLYS (77 aa)) are Intravirion-facing. The tract at residues 89 to 109 (NGWNNKNPANFQDVQRNKLYS) is disordered. The span at 90–109 (GWNNKNPANFQDVQRNKLYS) shows a compositional bias: polar residues.

This sequence belongs to the gammacoronaviruses E protein family. In terms of assembly, homooligomer. Interacts with the M membrane protein in the budding compartment of the host cell, which is located between endoplasmic reticulum and the Golgi complex. The cytoplasmic tails of both proteins are important for this function. Interacts with Nucleoprotein.

It localises to the host Golgi apparatus membrane. Plays a central role in virus morphogenesis and assembly. Acts as a viroporin and self-assembles in host membranes forming pentameric protein-lipid pores that allow ion transport. Also plays a role in the induction of apoptosis. This Avian infectious bronchitis virus (strain KB8523) (IBV) protein is Envelope small membrane protein.